Reading from the N-terminus, the 364-residue chain is Probable protein phosphatase methylesterase 1 (364 aa).

The segment at 1 to 53 (MSDDKLDTLPDLQSETSHVTTPHRQNDLLRQAVTHGRPPPVPSTSTSGKKREM) is disordered. The segment covering 11–23 (DLQSETSHVTTPH) has biased composition (polar residues). Residues Ser164, Asp190, and His316 contribute to the active site.

It belongs to the AB hydrolase superfamily.

It carries out the reaction [phosphatase 2A protein]-C-terminal L-leucine methyl ester + H2O = [phosphatase 2A protein]-C-terminal L-leucine + methanol + H(+). Its function is as follows. Demethylates proteins that have been reversibly carboxymethylated. The polypeptide is Probable protein phosphatase methylesterase 1 (Caenorhabditis elegans).